The primary structure comprises 359 residues: Putative mannose-1-phosphate guanyltransferase (359 aa).

This sequence belongs to the transferase hexapeptide repeat family.

The enzyme catalyses alpha-D-mannose 1-phosphate + GTP + H(+) = GDP-alpha-D-mannose + diphosphate. The chain is Putative mannose-1-phosphate guanyltransferase (mpg1) from Sulfolobus acidocaldarius (strain ATCC 33909 / DSM 639 / JCM 8929 / NBRC 15157 / NCIMB 11770).